Here is a 144-residue protein sequence, read N- to C-terminus: Mercuric transport protein MerC (144 aa).

The Cytoplasmic segment spans residues 1 to 21 (MSAITRIIDKIGIVGTIVGSF). A helical transmembrane segment spans residues 22-42 (SCAMCFPAAASLGAAIGLGFL). The Hg(2+) site is built by cysteine 23 and cysteine 26. The Periplasmic segment spans residues 43-46 (SQWE). A helical membrane pass occupies residues 47-67 (GLFVQWLIPIFASVALLATLA). Over 68–78 (GWFSHRQWQRT) the chain is Cytoplasmic. The helical transmembrane segment at 79 to 99 (LLGSIGPVLALVGVFGLTHHF) threads the bilayer. Topologically, residues 100-103 (LDKD) are periplasmic. Residues 104-124 (LARVIFYTGLVVMFLVSIWDM) form a helical membrane-spanning segment. Topologically, residues 125 to 144 (VNPANRRCATDGCETPAPRS) are cytoplasmic.

As to quaternary structure, monomer.

It is found in the cell inner membrane. With respect to regulation, inhibited by the thiol-modifying reagent N-ethylmaleimide (NEM). Its function is as follows. Involved in mercuric ion uptake. In Acidithiobacillus ferrooxidans (Thiobacillus ferrooxidans), this protein is Mercuric transport protein MerC.